A 340-amino-acid chain; its full sequence is GTPase Obg (340 aa).

The 159-residue stretch at methionine 1 to isoleucine 159 folds into the Obg domain. The region spanning alanine 160 to glutamate 331 is the OBG-type G domain. GTP is bound by residues glycine 166–serine 173, phenylalanine 191–threonine 195, aspartate 213–glycine 216, asparagine 283–aspartate 286, and serine 312–valine 314. Residues serine 173 and threonine 193 each contribute to the Mg(2+) site.

It belongs to the TRAFAC class OBG-HflX-like GTPase superfamily. OBG GTPase family. Monomer. It depends on Mg(2+) as a cofactor.

It is found in the cytoplasm. Functionally, an essential GTPase which binds GTP, GDP and possibly (p)ppGpp with moderate affinity, with high nucleotide exchange rates and a fairly low GTP hydrolysis rate. Plays a role in control of the cell cycle, stress response, ribosome biogenesis and in those bacteria that undergo differentiation, in morphogenesis control. This is GTPase Obg from Persephonella marina (strain DSM 14350 / EX-H1).